A 351-amino-acid polypeptide reads, in one-letter code: Putative [LysW]-L-2-aminoadipate/[LysW]-L-glutamate phosphate reductase (351 aa).

NADP(+) is bound by residues 9 to 12 and 33 to 35; these read SGFV and SRR. The active site involves C150. NADP(+) is bound at residue N318.

Belongs to the NAGSA dehydrogenase family. Type 1 subfamily. LysY sub-subfamily.

It localises to the cytoplasm. It carries out the reaction [amino-group carrier protein]-C-terminal-N-(1-carboxy-5-oxopentan-1-yl)-L-glutamine + phosphate + NADP(+) = [amino-group carrier protein]-C-terminal-N-(1-carboxy-5-phosphooxy-5-oxopentan-1-yl)-L-glutamine + NADPH + H(+). The enzyme catalyses [amino-group carrier protein]-C-terminal-gamma-(L-glutamyl-5-semialdehyde)-L-glutamate + phosphate + NADP(+) = [amino-group carrier protein]-C-terminal-gamma-(5-phospho-L-glutamyl)-L-glutamate + NADPH + H(+). It functions in the pathway amino-acid biosynthesis; L-lysine biosynthesis via AAA pathway; L-lysine from L-alpha-aminoadipate (Thermus route): step 3/5. The protein operates within amino-acid biosynthesis; L-arginine biosynthesis. Involved in both the arginine and lysine biosynthetic pathways. In Pyrobaculum aerophilum (strain ATCC 51768 / DSM 7523 / JCM 9630 / CIP 104966 / NBRC 100827 / IM2), this protein is Putative [LysW]-L-2-aminoadipate/[LysW]-L-glutamate phosphate reductase.